Reading from the N-terminus, the 330-residue chain is Fructose-1,6-bisphosphatase class 1 (330 aa).

Positions 78, 97, 99, and 100 each coordinate Mg(2+). Substrate contacts are provided by residues 100-103 and Asn188; that span reads DGSS. Glu260 lines the Mg(2+) pocket.

It belongs to the FBPase class 1 family. In terms of assembly, homotetramer. The cofactor is Mg(2+).

Its subcellular location is the cytoplasm. It carries out the reaction beta-D-fructose 1,6-bisphosphate + H2O = beta-D-fructose 6-phosphate + phosphate. It functions in the pathway carbohydrate biosynthesis; gluconeogenesis. The sequence is that of Fructose-1,6-bisphosphatase class 1 from Paracoccus denitrificans (strain Pd 1222).